We begin with the raw amino-acid sequence, 79 residues long: Acyl carrier protein (79 aa).

Positions 2-77 (SDIEARVKKI…NAIDYANTHH (76 aa)) constitute a Carrier domain. Ser37 carries the O-(pantetheine 4'-phosphoryl)serine modification.

The protein belongs to the acyl carrier protein (ACP) family. In terms of processing, 4'-phosphopantetheine is transferred from CoA to a specific serine of apo-ACP by AcpS. This modification is essential for activity because fatty acids are bound in thioester linkage to the sulfhydryl of the prosthetic group.

The protein localises to the cytoplasm. Its pathway is lipid metabolism; fatty acid biosynthesis. In terms of biological role, carrier of the growing fatty acid chain in fatty acid biosynthesis. In Polaromonas naphthalenivorans (strain CJ2), this protein is Acyl carrier protein.